Here is a 345-residue protein sequence, read N- to C-terminus: Viral Fc-gamma receptor-like protein UL119 (345 aa).

A signal peptide spans 1–23; that stretch reads MCSVLAIALVVALLGDMHPGVKS. Positions 23-43 are disordered; the sequence is SSTTSAVTSPSNTTVTSTTSI. Residues 24 to 293 are Virion surface-facing; sequence STTSAVTSPS…IKSDPLFEDR (270 aa). 12 N-linked (GlcNAc...) asparagine; by host glycosylation sites follow: N34, N48, N95, N104, N148, N179, N198, N217, N225, N241, N244, and N260. Positions 91–190 constitute an Ig-like V-type domain; sequence QVSLNATCKV…TWDLFTYPIY (100 aa). The helical transmembrane segment at 294–314 threads the bilayer; it reads LLAYGVLAFLVFMVIILLYVT. Over 315–345 the chain is Intravirion; that stretch reads YMLARRRDWSYKRLEEPVEEKKHPVPYFKQW.

The protein resides in the virion membrane. Functionally, serves as a receptor for the Fc part of human IgG. May thus be involved in interfering with host Ig-mediated immune responses. The chain is Viral Fc-gamma receptor-like protein UL119 (UL119/UL118) from Homo sapiens (Human).